Here is a 366-residue protein sequence, read N- to C-terminus: Alanine racemase (366 aa).

Lysine 40 acts as the Proton acceptor; specific for D-alanine in catalysis. N6-(pyridoxal phosphate)lysine is present on lysine 40. Residue arginine 136 participates in substrate binding. Catalysis depends on tyrosine 263, which acts as the Proton acceptor; specific for L-alanine. Methionine 310 contacts substrate.

It belongs to the alanine racemase family. Pyridoxal 5'-phosphate is required as a cofactor.

The enzyme catalyses L-alanine = D-alanine. Its pathway is amino-acid biosynthesis; D-alanine biosynthesis; D-alanine from L-alanine: step 1/1. In terms of biological role, catalyzes the interconversion of L-alanine and D-alanine. May also act on other amino acids. This Streptococcus pyogenes serotype M1 protein is Alanine racemase (alr).